The following is a 380-amino-acid chain: Cytochrome b (380 aa).

The next 4 helical transmembrane spans lie at 34–54 (FGSLLAVCLITQILTGLLLAM), 78–99 (WLIRNLHANGASFFFICIFLHI), 114–134 (WNTGVILLLTLMATAFVGYVL), and 179–199 (FFALHFLLPFVIAGITIIHLT). Positions 84 and 98 each coordinate heme b. The heme b site is built by His-183 and His-197. His-202 serves as a coordination point for a ubiquinone. 4 helical membrane passes run 227-247 (IKDILGLALMFIPFLTLTLFS), 289-309 (LGGVLALAASVLILLLIPFLH), 321-341 (LSQTLFWLLVANLLILTWIGS), and 348-368 (FIIIGQMASLSYFSILLILFP).

Belongs to the cytochrome b family. The cytochrome bc1 complex contains 11 subunits: 3 respiratory subunits (MT-CYB, CYC1 and UQCRFS1), 2 core proteins (UQCRC1 and UQCRC2) and 6 low-molecular weight proteins (UQCRH/QCR6, UQCRB/QCR7, UQCRQ/QCR8, UQCR10/QCR9, UQCR11/QCR10 and a cleavage product of UQCRFS1). This cytochrome bc1 complex then forms a dimer. Requires heme b as cofactor.

The protein localises to the mitochondrion inner membrane. Functionally, component of the ubiquinol-cytochrome c reductase complex (complex III or cytochrome b-c1 complex) that is part of the mitochondrial respiratory chain. The b-c1 complex mediates electron transfer from ubiquinol to cytochrome c. Contributes to the generation of a proton gradient across the mitochondrial membrane that is then used for ATP synthesis. This is Cytochrome b (MT-CYB) from Alectoris graeca (Rock partridge).